The primary structure comprises 337 residues: NADH-quinone oxidoreductase subunit H (337 aa).

The next 8 membrane-spanning stretches (helical) occupy residues 9–29 (FAKIWAVLIPLFLAVAYFTYV), 77–97 (FLIAPAMAIMPALAAWAVIPF), 110–130 (LLYILAMTSLGVYGLIIAGWA), 154–174 (MGFALVGVLIAAGTMNLSGIV), 181–201 (FWEWFWLPLLPLFLIYWISGV), 229–249 (MAFAVFFLAEYANMLLISFLA), 274–294 (VPGIVWLFAKAAFFAFCYLWF), and 313–333 (VLIPGTVVWLVVLTGLVYGGV).

Belongs to the complex I subunit 1 family. In terms of assembly, NDH-1 is composed of 14 different subunits. Subunits NuoA, H, J, K, L, M, N constitute the membrane sector of the complex.

It localises to the cell inner membrane. It carries out the reaction a quinone + NADH + 5 H(+)(in) = a quinol + NAD(+) + 4 H(+)(out). NDH-1 shuttles electrons from NADH, via FMN and iron-sulfur (Fe-S) centers, to quinones in the respiratory chain. The immediate electron acceptor for the enzyme in this species is believed to be ubiquinone. Couples the redox reaction to proton translocation (for every two electrons transferred, four hydrogen ions are translocated across the cytoplasmic membrane), and thus conserves the redox energy in a proton gradient. This subunit may bind ubiquinone. This is NADH-quinone oxidoreductase subunit H from Halorhodospira halophila (strain DSM 244 / SL1) (Ectothiorhodospira halophila (strain DSM 244 / SL1)).